Here is a 72-residue protein sequence, read N- to C-terminus: Translation initiation factor IF-1 2 (72 aa).

One can recognise an S1-like domain in the interval 1-72 (MAKEDTIQMQ…SRARIVFRAK (72 aa)).

The protein belongs to the IF-1 family. As to quaternary structure, component of the 30S ribosomal translation pre-initiation complex which assembles on the 30S ribosome in the order IF-2 and IF-3, IF-1 and N-formylmethionyl-tRNA(fMet); mRNA recruitment can occur at any time during PIC assembly.

It localises to the cytoplasm. One of the essential components for the initiation of protein synthesis. Stabilizes the binding of IF-2 and IF-3 on the 30S subunit to which N-formylmethionyl-tRNA(fMet) subsequently binds. Helps modulate mRNA selection, yielding the 30S pre-initiation complex (PIC). Upon addition of the 50S ribosomal subunit IF-1, IF-2 and IF-3 are released leaving the mature 70S translation initiation complex. The polypeptide is Translation initiation factor IF-1 2 (Chromobacterium violaceum (strain ATCC 12472 / DSM 30191 / JCM 1249 / CCUG 213 / NBRC 12614 / NCIMB 9131 / NCTC 9757 / MK)).